We begin with the raw amino-acid sequence, 419 residues long: L-rhamnose isomerase (419 aa).

Residues His-262, Asp-294, and Asp-296 each contribute to the Mn(2+) site.

This sequence belongs to the rhamnose isomerase family. As to quaternary structure, homotetramer. It depends on Mn(2+) as a cofactor.

It is found in the cytoplasm. It catalyses the reaction L-rhamnopyranose = L-rhamnulose. The protein operates within carbohydrate degradation; L-rhamnose degradation; glycerone phosphate from L-rhamnose: step 1/3. In terms of biological role, catalyzes the interconversion of L-rhamnose and L-rhamnulose. The protein is L-rhamnose isomerase of Salmonella typhi.